The chain runs to 102 residues: Co-chaperonin GroES (102 aa).

It belongs to the GroES chaperonin family. Heptamer of 7 subunits arranged in a ring. Interacts with the chaperonin GroEL.

The protein localises to the cytoplasm. Functionally, together with the chaperonin GroEL, plays an essential role in assisting protein folding. The GroEL-GroES system forms a nano-cage that allows encapsulation of the non-native substrate proteins and provides a physical environment optimized to promote and accelerate protein folding. GroES binds to the apical surface of the GroEL ring, thereby capping the opening of the GroEL channel. In Streptomyces griseus subsp. griseus (strain JCM 4626 / CBS 651.72 / NBRC 13350 / KCC S-0626 / ISP 5235), this protein is Co-chaperonin GroES.